Reading from the N-terminus, the 179-residue chain is uncharacterized protein (179 aa).

Transmembrane regions (helical) follow at residues 9-31 (WILVILFATLLFFAFTGIFVSTL), 41-63 (AFLLGFLGALVFANKLLFGYGSF), 114-136 (AYYGIFTLMLIIMLLSKFDLLGA), and 146-168 (AFWGAAVITLFVFALEITANYLM).

It localises to the cell membrane. This is an uncharacterized protein from Aquifex aeolicus (strain VF5).